The sequence spans 607 residues: ATP-dependent zinc metalloprotease FtsH 2 (607 aa).

The Cytoplasmic segment spans residues 1–2; it reads MR. The helical transmembrane segment at 3–23 threads the bilayer; it reads SLWIVLVLVLGSALLLQVMAA. Residues 24–99 are Periplasmic-facing; sequence SDDRIPYARF…PYTRVADELG (76 aa). The helical transmembrane segment at 100–120 threads the bilayer; the sequence is LPPYLWLLLPLAGLAAMGHLA. The Cytoplasmic segment spans residues 121 to 607; that stretch reads SRRATTAGTI…LREMVASGEA (487 aa). Residue 195–202 participates in ATP binding; it reads GPPGTGKT. His418 contributes to the Zn(2+) binding site. Glu419 is a catalytic residue. His422 and Asp495 together coordinate Zn(2+).

It in the central section; belongs to the AAA ATPase family. In the C-terminal section; belongs to the peptidase M41 family. In terms of assembly, homohexamer. Requires Zn(2+) as cofactor.

The protein resides in the cell inner membrane. Acts as a processive, ATP-dependent zinc metallopeptidase for both cytoplasmic and membrane proteins. Plays a role in the quality control of integral membrane proteins. This chain is ATP-dependent zinc metalloprotease FtsH 2, found in Sorangium cellulosum (strain So ce56) (Polyangium cellulosum (strain So ce56)).